A 316-amino-acid chain; its full sequence is Methionyl-tRNA formyltransferase (316 aa).

Residue 112-115 (SLLP) coordinates (6S)-5,6,7,8-tetrahydrofolate.

This sequence belongs to the Fmt family.

It carries out the reaction L-methionyl-tRNA(fMet) + (6R)-10-formyltetrahydrofolate = N-formyl-L-methionyl-tRNA(fMet) + (6S)-5,6,7,8-tetrahydrofolate + H(+). Attaches a formyl group to the free amino group of methionyl-tRNA(fMet). The formyl group appears to play a dual role in the initiator identity of N-formylmethionyl-tRNA by promoting its recognition by IF2 and preventing the misappropriation of this tRNA by the elongation apparatus. This Glaesserella parasuis serovar 5 (strain SH0165) (Haemophilus parasuis) protein is Methionyl-tRNA formyltransferase.